A 510-amino-acid chain; its full sequence is Insulinoma-associated protein 1 (510 aa).

Residues 1 to 12 (MPRGFLVKRSKK) are compositionally biased toward basic residues. The segment at 1 to 20 (MPRGFLVKRSKKSTPVSYRV) is SNAG domain. Disordered stretches follow at residues 1-110 (MPRG…SREH) and 176-226 (GAEA…PKAI). Positions 2–7 (PRGFLV) are required and sufficient for interaction with KDM1A. The tract at residues 43 to 58 (PPAPSPVPGPLPPPPP) is necessary for interaction with CCND1. Over residues 43–59 (PPAPSPVPGPLPPPPPA) the composition is skewed to pro residues. 2 stretches are compositionally biased toward low complexity: residues 64–74 (AALAAALACAP) and 209–218 (EPPAKAVKAP). The C2H2-type 1; atypical zinc-finger motif lies at 267–287 (FICQLCKEEYADPFALAQHKC). The C2H2-type 2 zinc finger occupies 295–317 (YRCPECAKVFSCPANLASHRRWH). Residues 315–362 (RWHKPRPAPAAARAPEPEAAARAEAREAPGGGSDRDTPSPGGVSESGS) form a disordered region. Positions 329–351 (PEPEAAARAEAREAPGGGSDRDT) are enriched in basic and acidic residues. C2H2-type zinc fingers lie at residues 367–389 (YECHHCAKKFRRQAYLRKHLLAH), 441–464 (HLCPVCGESFASKGAQERHLRLLH), and 469–492 (FPCKYCPATFYSSPGLTRHINKCH).

The protein belongs to the INSM1 family. As to quaternary structure, interacts (via the SNAG domain) with HDAC1. Interacts (via the SNAG domain) with HDAC2. Interacts (via the SNAG domain) with KDM1A. Interacts (via the SNAG domain) with RCOR1. Interacts with SORBS1. Interacts (via the N-terminal region) with CCND1 (via cyclin N-terminal domain); the interaction competes with the binding of CCND1 to CDK4 during cell cycle progression and increases its transcriptional repressor activity. Interacts with HDAC3; the interaction increases its transcriptional repressor activity. In terms of tissue distribution, expressed in pancreatic duct cells. Expressed in several tumor cell lines of neuroendocrine origin including pheochromocytoma, medullary thyroid carcinoma, insulinoma, medulloblastoma, retinoblastoma, pheochromacytoma, medullary thyroid carcinoma and small cell lung carcinoma.

Its subcellular location is the nucleus. Its function is as follows. Sequence-specific DNA-binding transcriptional regulator that plays a key role in neurogenesis and neuroendocrine cell differentiation during embryonic and/or fetal development. Binds to the consensus sequence 5'-[TG][TC][TC][TT][GA]GGG[CG]A-3' in target promoters. Acts as a transcriptional repressor of NEUROD1 and INS expression via its interaction with cyclin CCND1 in a cell cycle-independent manner. Negatively regulates skeletal muscle-specific gene expression in endocrine cells of the pituitary by inhibiting the Notch signaling pathway. Represses target gene transcription by recruiting chromatin-modifying factors, such as HDAC1, HDAC2, HDAC3, KDM1A and RCOR1 histone deacetylases. Binds to its own promoter, suggesting autoregulation as a self-control feedback mechanism. Competes with histone H3 for the same binding site on the histone demethylase complex formed by KDM1A and RCOR1, and thereby inhibits demethylation of histone H3 at 'Lys-4'. Promotes the generation and expansion of neuronal basal progenitor cells in the developing neocortex. Involved in the differentiation of endocrine cells of the developing anterior pituitary gland, of the pancreas and intestine, and of sympatho-adrenal cells in the peripheral nervous system. Promotes cell cycle signaling arrest and inhibition of cellular proliferation. The polypeptide is Insulinoma-associated protein 1 (INSM1) (Homo sapiens (Human)).